A 175-amino-acid chain; its full sequence is Large ribosomal subunit protein uL10 (175 aa).

Belongs to the universal ribosomal protein uL10 family. Part of the ribosomal stalk of the 50S ribosomal subunit. The N-terminus interacts with L11 and the large rRNA to form the base of the stalk. The C-terminus forms an elongated spine to which L12 dimers bind in a sequential fashion forming a multimeric L10(L12)X complex.

Functionally, forms part of the ribosomal stalk, playing a central role in the interaction of the ribosome with GTP-bound translation factors. This chain is Large ribosomal subunit protein uL10, found in Mycolicibacterium smegmatis (strain ATCC 700084 / mc(2)155) (Mycobacterium smegmatis).